A 651-amino-acid polypeptide reads, in one-letter code: p-hydroxybenzoic acid efflux pump subunit AaeB (651 aa).

11 helical membrane passes run 11–31 (FACK…WFEM), 41–61 (AAIV…SGAI), 65–85 (GLLR…IIMT), 91–111 (VVML…SSLV), 117–137 (YVFA…QSSP), 150–170 (EIIL…PRSV), 367–387 (LFWL…LGVV), 404–424 (FLIG…LVLP), 428–448 (QSLL…GIEI), 454–474 (GSLG…PMTF), and 480–500 (LDNA…IMLI).

It belongs to the aromatic acid exporter ArAE (TC 2.A.85) family.

It localises to the cell inner membrane. Its function is as follows. Forms an efflux pump with AaeA. Could function as a metabolic relief valve, allowing to eliminate certain compounds when they accumulate to high levels in the cell. The chain is p-hydroxybenzoic acid efflux pump subunit AaeB from Musicola paradisiaca (strain Ech703) (Dickeya paradisiaca).